The primary structure comprises 410 residues: MSAKKPVKKVVLAYSGGLDTSVILKWLQDAYDAEVVTFTADLGQGEELEPARRKAEAAGVSEIFIEDLREEFVRDFVYPMVRANAVYEGLYLLGTSIARPLIAKRLVEIAHATGADAVAHGATGKGNDQVRFELGVYALDPDLRVIAPWREWDLNSRTKLIAYAEENGIEVAKDKRGEAPFSVDANLWHTSSEGKILEDPAEEAADIVYQRTDAPEAAPDKPEYVTIAFEAGDAVAVNGEAMSPATLLTRLNALGRVHGVGRLDLVENRFVGMKSRGIYETPGGTILMAAHRGIEQITLDRGACHLKDELMPRYAKLLYEGFWFSPEREMLQAAIDHSQKDVTGEVRLKLYKGSVNVVGRSSEHSLYSLEHVTFEEDIVYDQKDAEGFIRLNALRLQLLARRKRRLGHNE.

ATP is bound by residues 13-21 (AYSGGLDTS) and Ala-40. The L-citrulline site is built by Tyr-91 and Ser-96. Gly-121 provides a ligand contact to ATP. L-aspartate is bound by residues Thr-123, Asn-127, and Asp-128. Asn-127 lines the L-citrulline pocket. Arg-131, Ser-182, Ser-191, Glu-267, and Tyr-279 together coordinate L-citrulline.

This sequence belongs to the argininosuccinate synthase family. Type 1 subfamily. Homotetramer.

It is found in the cytoplasm. It carries out the reaction L-citrulline + L-aspartate + ATP = 2-(N(omega)-L-arginino)succinate + AMP + diphosphate + H(+). Its pathway is amino-acid biosynthesis; L-arginine biosynthesis; L-arginine from L-ornithine and carbamoyl phosphate: step 2/3. The polypeptide is Argininosuccinate synthase (Maricaulis maris (strain MCS10) (Caulobacter maris)).